Reading from the N-terminus, the 124-residue chain is Putative ankyrin repeat protein RF_1087 (124 aa).

ANK repeat units lie at residues Asn-17–Ile-46, Asn-50–Ser-79, and Phe-83–Asn-112.

In Rickettsia felis (strain ATCC VR-1525 / URRWXCal2) (Rickettsia azadi), this protein is Putative ankyrin repeat protein RF_1087.